The chain runs to 647 residues: DNA mismatch repair protein MutL (647 aa).

It belongs to the DNA mismatch repair MutL/HexB family.

This protein is involved in the repair of mismatches in DNA. It is required for dam-dependent methyl-directed DNA mismatch repair. May act as a 'molecular matchmaker', a protein that promotes the formation of a stable complex between two or more DNA-binding proteins in an ATP-dependent manner without itself being part of a final effector complex. This chain is DNA mismatch repair protein MutL, found in Bacillus cereus (strain 03BB102).